Consider the following 244-residue polypeptide: Monothiol glutaredoxin-4 (244 aa).

The 108-residue stretch at 3–110 folds into the Thioredoxin domain; sequence VVEIKSQDQF…FVKSLEILSN (108 aa). The tract at residues 116 to 143 is disordered; it reads ANNAKGPKSTSDEESSGSSDDEEDETEE. Over residues 127–143 the composition is skewed to acidic residues; sequence DEESSGSSDDEEDETEE. A Glutaredoxin domain is found at 146–244; that stretch reads NARLVKLVQA…DPEYFQHALQ (99 aa). K163 is a glutathione binding site. [2Fe-2S] cluster is bound at residue C171. Glutathione-binding positions include R200, F212, and 225–226; that span reads LD.

The protein belongs to the glutaredoxin family. Monothiol subfamily. Homodimer. Heterodimer with FRA2.

Its function is as follows. Monothiol glutaredoxin involved in the biogenesis of iron-sulfur clusters. Binds one iron-sulfur cluster per dimer. The iron-sulfur cluster is bound between subunits, and is complexed by a bound glutathione and a cysteine residue from each subunit. The polypeptide is Monothiol glutaredoxin-4 (GRX4) (Saccharomyces cerevisiae (strain ATCC 204508 / S288c) (Baker's yeast)).